Consider the following 338-residue polypeptide: D-erythrose-4-phosphate dehydrogenase (338 aa).

NAD(+) is bound at residue 11–12 (RI). Residues 153–155 (SCT), R199, 212–213 (TK), and R235 each bind substrate. The Nucleophile role is filled by C154. N317 serves as a coordination point for NAD(+).

Belongs to the glyceraldehyde-3-phosphate dehydrogenase family. Epd subfamily. In terms of assembly, homotetramer.

It localises to the cytoplasm. It carries out the reaction D-erythrose 4-phosphate + NAD(+) + H2O = 4-phospho-D-erythronate + NADH + 2 H(+). The protein operates within cofactor biosynthesis; pyridoxine 5'-phosphate biosynthesis; pyridoxine 5'-phosphate from D-erythrose 4-phosphate: step 1/5. In terms of biological role, catalyzes the NAD-dependent conversion of D-erythrose 4-phosphate to 4-phosphoerythronate. The chain is D-erythrose-4-phosphate dehydrogenase from Shewanella amazonensis (strain ATCC BAA-1098 / SB2B).